We begin with the raw amino-acid sequence, 177 residues long: MSKIGKLPVAIPAGVTASLDGQTVKVKGPKGALEVTLVEEIAAKIEGSELKVSMNGETTRHKAMWGMSRTLVANLVEGVTKGFEKKLEITGVGYKAAVQGKNLNLSLGYSHDVIYAIPEGIQIVTPKPTEVVISGIDRQKVGQVAAEIREFRGPEPYKGKGVKYAGEFIFRKEGKKK.

It belongs to the universal ribosomal protein uL6 family. In terms of assembly, part of the 50S ribosomal subunit.

Functionally, this protein binds to the 23S rRNA, and is important in its secondary structure. It is located near the subunit interface in the base of the L7/L12 stalk, and near the tRNA binding site of the peptidyltransferase center. This Xanthobacter autotrophicus (strain ATCC BAA-1158 / Py2) protein is Large ribosomal subunit protein uL6.